Reading from the N-terminus, the 201-residue chain is Glycerol-3-phosphate acyltransferase (201 aa).

Helical transmembrane passes span 9–29, 60–80, 86–106, 116–136, and 153–173; these read LTLI…FGLI, LAAA…LVAS, AAIG…WIGF, LGVL…VWIV, and IVVP…LFAI.

Belongs to the PlsY family. Probably interacts with PlsX.

It localises to the cell inner membrane. It carries out the reaction an acyl phosphate + sn-glycerol 3-phosphate = a 1-acyl-sn-glycero-3-phosphate + phosphate. It functions in the pathway lipid metabolism; phospholipid metabolism. Its function is as follows. Catalyzes the transfer of an acyl group from acyl-phosphate (acyl-PO(4)) to glycerol-3-phosphate (G3P) to form lysophosphatidic acid (LPA). This enzyme utilizes acyl-phosphate as fatty acyl donor, but not acyl-CoA or acyl-ACP. In Brucella anthropi (strain ATCC 49188 / DSM 6882 / CCUG 24695 / JCM 21032 / LMG 3331 / NBRC 15819 / NCTC 12168 / Alc 37) (Ochrobactrum anthropi), this protein is Glycerol-3-phosphate acyltransferase.